Here is a 329-residue protein sequence, read N- to C-terminus: GMP reductase (329 aa).

Cys178 serves as the catalytic Thioimidate intermediate. 207–230 (VIADGGIRTHGDIAKSIRMGATMV) contributes to the NADP(+) binding site.

The protein belongs to the IMPDH/GMPR family. GuaC type 2 subfamily.

The enzyme catalyses IMP + NH4(+) + NADP(+) = GMP + NADPH + 2 H(+). Its function is as follows. Catalyzes the irreversible NADPH-dependent deamination of GMP to IMP. It functions in the conversion of nucleobase, nucleoside and nucleotide derivatives of G to A nucleotides, and in maintaining the intracellular balance of A and G nucleotides. The protein is GMP reductase of Lactococcus lactis subsp. lactis (strain IL1403) (Streptococcus lactis).